The sequence spans 317 residues: MSTLLERTKSVQELKKRAAGKTSANPAEVAKAKKVLRRLYSWDEIPEWQRDNDFILHGYVKETSSFIETFKSLFYLHNESVNIYSHLIPALGFFTVLLLDKSTIKVFATTTWLDHMVIDLFYSGAFACLILSSSFHCLKSHSLRIATLGNKLDYLGICILIVTSMVSILYYGYFEKFSLFCLFALITVSFGIACSIVSLKDKFRKREWRPYRAGLFVCFGLSSIIPIFSGLYCYSFSEIWTQIQLFWVLLGGVLYIIGAVLYGMRFPEKICPGKFDIWGHSHQLFHFLVVIAALCHLRGLLNSYELVHIKMENGIVS.

Over 1-78 the chain is Cytoplasmic; that stretch reads MSTLLERTKS…TFKSLFYLHN (78 aa). A helical transmembrane segment spans residues 79-99; sequence ESVNIYSHLIPALGFFTVLLL. At 100–110 the chain is on the extracellular side; sequence DKSTIKVFATT. The helical transmembrane segment at 111–131 threads the bilayer; that stretch reads TWLDHMVIDLFYSGAFACLIL. Over 132-153 the chain is Cytoplasmic; sequence SSSFHCLKSHSLRIATLGNKLD. Residues 154–174 traverse the membrane as a helical segment; it reads YLGICILIVTSMVSILYYGYF. The Extracellular segment spans residues 175–176; sequence EK. The helical transmembrane segment at 177–197 threads the bilayer; that stretch reads FSLFCLFALITVSFGIACSIV. Residues 198 to 212 lie on the Cytoplasmic side of the membrane; that stretch reads SLKDKFRKREWRPYR. A helical transmembrane segment spans residues 213 to 233; it reads AGLFVCFGLSSIIPIFSGLYC. Topologically, residues 234-242 are extracellular; that stretch reads YSFSEIWTQ. A helical transmembrane segment spans residues 243–263; sequence IQLFWVLLGGVLYIIGAVLYG. Over 264–276 the chain is Cytoplasmic; sequence MRFPEKICPGKFD. A helical membrane pass occupies residues 277-297; the sequence is IWGHSHQLFHFLVVIAALCHL. The Extracellular segment spans residues 298–317; the sequence is RGLLNSYELVHIKMENGIVS.

This sequence belongs to the ADIPOR family.

Its subcellular location is the membrane. In terms of biological role, probable receptor, which is involved in metabolic pathways that regulate lipid metabolism such as fatty acid oxidation. The polypeptide is ADIPOR-like receptor IZH2 (IZH2) (Saccharomyces cerevisiae (strain ATCC 204508 / S288c) (Baker's yeast)).